We begin with the raw amino-acid sequence, 426 residues long: Endoglucanase (426 aa).

A signal peptide spans 1–19 (MRRCMPLVAASVAALMLAG). The N-palmitoyl cysteine moiety is linked to residue C20. A lipid anchor (S-diacylglycerol cysteine) is attached at C20. The propeptide occupies 20–45 (CGGGDGDPSLSTASVSATDTTTLKPA). The Proton donor role is filled by E249. Catalysis depends on E361, which acts as the Nucleophile.

It belongs to the glycosyl hydrolase 5 (cellulase A) family.

Its subcellular location is the cell membrane. It carries out the reaction Endohydrolysis of (1-&gt;4)-beta-D-glucosidic linkages in cellulose, lichenin and cereal beta-D-glucans.. In Ralstonia solanacearum (Pseudomonas solanacearum), this protein is Endoglucanase (egl).